Here is a 442-residue protein sequence, read N- to C-terminus: Histidinol dehydrogenase (442 aa).

NAD(+) contacts are provided by Y142, Q204, and N227. Substrate is bound by residues S250, Q272, and H275. Residues Q272 and H275 each contribute to the Zn(2+) site. Active-site proton acceptor residues include E340 and H341. Substrate contacts are provided by H341, D374, E428, and H433. Residue D374 coordinates Zn(2+). Position 433 (H433) interacts with Zn(2+).

It belongs to the histidinol dehydrogenase family. The cofactor is Zn(2+).

It catalyses the reaction L-histidinol + 2 NAD(+) + H2O = L-histidine + 2 NADH + 3 H(+). It functions in the pathway amino-acid biosynthesis; L-histidine biosynthesis; L-histidine from 5-phospho-alpha-D-ribose 1-diphosphate: step 9/9. Catalyzes the sequential NAD-dependent oxidations of L-histidinol to L-histidinaldehyde and then to L-histidine. This chain is Histidinol dehydrogenase, found in Prochlorococcus marinus (strain MIT 9313).